The primary structure comprises 474 residues: Nitrosuccinate lyase (474 aa).

Catalysis depends on Ser-295, which acts as the Proton acceptor. Lys-301 and Asn-303 together coordinate fumarate. Arg-334 (proton donor) is an active-site residue.

Belongs to the class-II fumarase/aspartase family.

It catalyses the reaction 2-nitrobutanedioate = fumarate + nitrite + H(+). Involved in the biosynthesis of desferrioxamine derivatives which have iron-binding properties and may act as siderophores. Catalyzes the formation of nitrous acid from nitrosuccinic acid (2-nitrobutanedioate) by elimination of its nitro group. The polypeptide is Nitrosuccinate lyase (Streptomyces davaonensis (strain DSM 101723 / JCM 4913 / KCC S-0913 / 768)).